A 329-amino-acid chain; its full sequence is Caveolae-associated protein 4a (329 aa).

2 disordered regions span residues 198–260 (SKEN…NIAK) and 274–329 (KERT…IHED). Positions 198–262 (SKENMNKTRE…RLKENIAKKA (65 aa)) form a coiled coil. Residues 201–220 (NMNKTREKTRENLSKTKESL) show a composition bias toward basic and acidic residues. Over residues 221 to 232 (SKTGQTLGTKFN) the composition is skewed to polar residues. The segment covering 242 to 260 (EQREKIKQSSERLKENIAK) has biased composition (basic and acidic residues). Positions 279–290 (AEGQEGAEAEPA) are enriched in low complexity. Thr-292 is modified (phosphothreonine). Over residues 310–329 (TENKREGPVSEEGATRIHED) the composition is skewed to basic and acidic residues.

The protein belongs to the CAVIN family.

The protein resides in the cytoplasm. It is found in the myofibril. The protein localises to the sarcomere. Its subcellular location is the membrane. It localises to the caveola. In terms of biological role, induces rhoa activation and activates nppa transcription and myofibrillar organization through the rho/rock signaling pathway. The polypeptide is Caveolae-associated protein 4a (cavin4a) (Danio rerio (Zebrafish)).